The following is a 295-amino-acid chain: MSVILGSDLVKRGMAQMQKGGVIMDVVNAEQARIAEAAGAVAVMALERVPSDIRAAGGVARMANPRIVKEVMEAVSIPVMAKARIGHITEARVLEAMGVDYIDESEVLTPADEEFHLLKSEYTVPFVCGCRDLGEALRRIGEGASMLRTKGEPGTGNIVEAVRHMRKVNSQVRKVVNMSTDELMTEAKILGAPFELLLQIKQLGKLPVVNFAAGGVATPADAALMMELGADGVFVGSGIFKAENPEKFARAIVQATTHYQDYDLIARLSEELGEPMRGLEISKLSVQDRMQERGW.

D25 lines the D-ribose 5-phosphate pocket. The active-site Schiff-base intermediate with D-ribose 5-phosphate is the K82. G154 lines the D-ribose 5-phosphate pocket. R166 serves as a coordination point for D-glyceraldehyde 3-phosphate. D-ribose 5-phosphate-binding positions include G215 and 236-237; that span reads GS.

The protein belongs to the PdxS/SNZ family. In terms of assembly, in the presence of PdxT, forms a dodecamer of heterodimers.

It carries out the reaction aldehydo-D-ribose 5-phosphate + D-glyceraldehyde 3-phosphate + L-glutamine = pyridoxal 5'-phosphate + L-glutamate + phosphate + 3 H2O + H(+). It functions in the pathway cofactor biosynthesis; pyridoxal 5'-phosphate biosynthesis. Functionally, catalyzes the formation of pyridoxal 5'-phosphate from ribose 5-phosphate (RBP), glyceraldehyde 3-phosphate (G3P) and ammonia. The ammonia is provided by the PdxT subunit. Can also use ribulose 5-phosphate and dihydroxyacetone phosphate as substrates, resulting from enzyme-catalyzed isomerization of RBP and G3P, respectively. This chain is Pyridoxal 5'-phosphate synthase subunit PdxS, found in Haemophilus ducreyi (strain 35000HP / ATCC 700724).